The chain runs to 210 residues: Germin-like protein subfamily 3 member 4 (210 aa).

Residues 1–18 form the signal peptide; the sequence is MKFFVVIVFCAIFLSVSG. A disulfide bridge links cysteine 27 with cysteine 44. The region spanning 58-190 is the Cupin type-1 domain; it reads TKLTEAGDTD…VFGIDQEHIK (133 aa). A glycan (N-linked (GlcNAc...) asparagine) is linked at asparagine 73. 4 residues coordinate Mn(2+): histidine 106, histidine 108, glutamate 113, and histidine 152.

This sequence belongs to the germin family. Oligomer (believed to be a pentamer but probably hexamer).

Its subcellular location is the secreted. The protein localises to the extracellular space. The protein resides in the apoplast. Its function is as follows. May play a role in plant defense. Probably has no oxalate oxidase activity even if the active site is conserved. In Arabidopsis thaliana (Mouse-ear cress), this protein is Germin-like protein subfamily 3 member 4.